Here is a 564-residue protein sequence, read N- to C-terminus: Probable metalloprotease ARX1 (564 aa).

Belongs to the peptidase M24 family. In terms of assembly, component of the nucleoplasmic and cytoplasmic pre-60S ribosomal particles.

It localises to the cytoplasm. Its subcellular location is the nucleus. Probable metalloprotease involved in proper assembly of pre-ribosomal particles during the biogenesis of the 60S ribosomal subunit. Accompanies the pre-60S particles to the cytoplasm. The polypeptide is Probable metalloprotease ARX1 (ARX1) (Candida albicans (strain SC5314 / ATCC MYA-2876) (Yeast)).